A 381-amino-acid polypeptide reads, in one-letter code: Succinyl-diaminopimelate desuccinylase (381 aa).

A Zn(2+)-binding site is contributed by His-69. Asp-71 is an active-site residue. Position 103 (Asp-103) interacts with Zn(2+). Residue Glu-137 is the Proton acceptor of the active site. Positions 138, 166, and 355 each coordinate Zn(2+).

The protein belongs to the peptidase M20A family. DapE subfamily. In terms of assembly, homodimer. Requires Zn(2+) as cofactor. Co(2+) is required as a cofactor.

The catalysed reaction is N-succinyl-(2S,6S)-2,6-diaminopimelate + H2O = (2S,6S)-2,6-diaminopimelate + succinate. It participates in amino-acid biosynthesis; L-lysine biosynthesis via DAP pathway; LL-2,6-diaminopimelate from (S)-tetrahydrodipicolinate (succinylase route): step 3/3. In terms of biological role, catalyzes the hydrolysis of N-succinyl-L,L-diaminopimelic acid (SDAP), forming succinate and LL-2,6-diaminopimelate (DAP), an intermediate involved in the bacterial biosynthesis of lysine and meso-diaminopimelic acid, an essential component of bacterial cell walls. In Rickettsia akari (strain Hartford), this protein is Succinyl-diaminopimelate desuccinylase.